The sequence spans 166 residues: Urease accessory protein UreE (166 aa).

The protein belongs to the UreE family.

The protein resides in the cytoplasm. In terms of biological role, involved in urease metallocenter assembly. Binds nickel. Probably functions as a nickel donor during metallocenter assembly. The protein is Urease accessory protein UreE of Azotobacter vinelandii (strain DJ / ATCC BAA-1303).